The sequence spans 358 residues: Peptide chain release factor 1 (358 aa).

Q233 is modified (N5-methylglutamine).

This sequence belongs to the prokaryotic/mitochondrial release factor family. Post-translationally, methylated by PrmC. Methylation increases the termination efficiency of RF1.

The protein resides in the cytoplasm. Functionally, peptide chain release factor 1 directs the termination of translation in response to the peptide chain termination codons UAG and UAA. This is Peptide chain release factor 1 from Staphylococcus aureus (strain MRSA252).